We begin with the raw amino-acid sequence, 369 residues long: Dihydroorotate dehydrogenase (quinone) (369 aa).

FMN contacts are provided by residues 76–80 (AGLDK) and Thr-100. A substrate-binding site is contributed by Lys-80. Substrate is bound at residue 125 to 129 (NRMGF). 2 residues coordinate FMN: Asn-154 and Asn-187. A substrate-binding site is contributed by Asn-187. Ser-190 serves as the catalytic Nucleophile. Residue Asn-192 participates in substrate binding. Positions 232 and 260 each coordinate FMN. Residue 261–262 (NT) participates in substrate binding. Residues Gly-282, Gly-311, and 332 to 333 (YS) contribute to the FMN site.

This sequence belongs to the dihydroorotate dehydrogenase family. Type 2 subfamily. As to quaternary structure, monomer. FMN is required as a cofactor.

The protein localises to the cell membrane. The enzyme catalyses (S)-dihydroorotate + a quinone = orotate + a quinol. The protein operates within pyrimidine metabolism; UMP biosynthesis via de novo pathway; orotate from (S)-dihydroorotate (quinone route): step 1/1. Its function is as follows. Catalyzes the conversion of dihydroorotate to orotate with quinone as electron acceptor. The chain is Dihydroorotate dehydrogenase (quinone) (pyrD) from Deinococcus radiodurans (strain ATCC 13939 / DSM 20539 / JCM 16871 / CCUG 27074 / LMG 4051 / NBRC 15346 / NCIMB 9279 / VKM B-1422 / R1).